Here is a 177-residue protein sequence, read N- to C-terminus: Large ribosomal subunit protein uL6 (177 aa).

The protein belongs to the universal ribosomal protein uL6 family. In terms of assembly, part of the 50S ribosomal subunit.

Its function is as follows. This protein binds to the 23S rRNA, and is important in its secondary structure. It is located near the subunit interface in the base of the L7/L12 stalk, and near the tRNA binding site of the peptidyltransferase center. The chain is Large ribosomal subunit protein uL6 from Dichelobacter nodosus (strain VCS1703A).